Consider the following 492-residue polypeptide: Proline--tRNA ligase (492 aa).

This sequence belongs to the class-II aminoacyl-tRNA synthetase family. ProS type 3 subfamily. As to quaternary structure, homodimer.

It localises to the cytoplasm. The enzyme catalyses tRNA(Pro) + L-proline + ATP = L-prolyl-tRNA(Pro) + AMP + diphosphate. Functionally, catalyzes the attachment of proline to tRNA(Pro) in a two-step reaction: proline is first activated by ATP to form Pro-AMP and then transferred to the acceptor end of tRNA(Pro). The chain is Proline--tRNA ligase from Christiangramia forsetii (strain DSM 17595 / CGMCC 1.15422 / KT0803) (Gramella forsetii).